A 320-amino-acid polypeptide reads, in one-letter code: 1-aminocyclopropane-1-carboxylate oxidase 3 (320 aa).

Positions 111–131 (NEYRLAMKDFGKRLEILAEEL) form a coiled coil. The Fe2OG dioxygenase domain maps to 155–256 (GPTFATKLSN…RMSIASFYNP (102 aa)). The Fe cation site is built by H180, D182, and H237. R247 contacts 2-oxoglutarate.

Belongs to the iron/ascorbate-dependent oxidoreductase family. Requires Fe(2+) as cofactor.

The catalysed reaction is 1-aminocyclopropane-1-carboxylate + L-ascorbate + O2 = ethene + L-dehydroascorbate + hydrogen cyanide + CO2 + 2 H2O. It participates in alkene biosynthesis; ethylene biosynthesis via S-adenosyl-L-methionine; ethylene from S-adenosyl-L-methionine: step 2/2. Its function is as follows. Enzyme involved in the ethylene biosynthesis. May promote stem elongation by maximizing the extensibility cells, possibly by activating ethylene biosynthesis, in response to very-long-chain fatty acids (VLCFAs C20:0 to C30:0). In Arabidopsis thaliana (Mouse-ear cress), this protein is 1-aminocyclopropane-1-carboxylate oxidase 3.